A 129-amino-acid chain; its full sequence is Small ribosomal subunit protein uS11 (129 aa).

It belongs to the universal ribosomal protein uS11 family. As to quaternary structure, part of the 30S ribosomal subunit. Interacts with proteins S7 and S18. Binds to IF-3.

Located on the platform of the 30S subunit, it bridges several disparate RNA helices of the 16S rRNA. Forms part of the Shine-Dalgarno cleft in the 70S ribosome. This Pseudomonas fluorescens (strain SBW25) protein is Small ribosomal subunit protein uS11.